A 1607-amino-acid polypeptide reads, in one-letter code: Dicer-like protein 1 (1607 aa).

Residues 1–74 (MNAEMREGSS…PDTKKWIVND (74 aa)) form a disordered region. A Helicase ATP-binding domain is found at 142–324 (LFERAKTQNT…IARSPELEGL (183 aa)). 155–162 (LDTGSGKT) provides a ligand contact to ATP. A DEAH box motif is present at residues 267-270 (DEAH). The 172-residue stretch at 461-632 (KVVILLRILR…EALPADRKLT (172 aa)) folds into the Helicase C-terminal domain. A Dicer dsRNA-binding fold domain is found at 665-755 (SLICLAAFVA…RPTFTKQLPA (91 aa)). Residues 905-1040 (GAVTFVRDNE…IVLEPLRISP (136 aa)) enclose the PAZ domain. RNase III domains lie at 1063–1219 (LVAL…LTAQ) and 1272–1447 (AARF…VDSR). Positions 1312, 1433, and 1436 each coordinate Mg(2+). The region spanning 1478-1556 (HPVTFLAGIM…AKKAIQVLEG (79 aa)) is the DRBM domain. Positions 1493, 1527, 1568, and 1570 each coordinate Zn(2+).

It belongs to the helicase family. Dicer subfamily. The cofactor is Mg(2+). Requires Mn(2+) as cofactor.

Functionally, dicer-like endonuclease involved in cleaving double-stranded RNA in the RNA interference (RNAi) pathway. Produces 21 to 25 bp dsRNAs (siRNAs) which target the selective destruction of homologous RNAs leading to sequence-specific suppression of gene expression, called post-transcriptional gene silencing (PTGS). Part of a broad host defense response against viral infection and transposons. The polypeptide is Dicer-like protein 1 (DCL1) (Chaetomium globosum (strain ATCC 6205 / CBS 148.51 / DSM 1962 / NBRC 6347 / NRRL 1970) (Soil fungus)).